Here is a 1316-residue protein sequence, read N- to C-terminus: DNA-directed RNA polymerase subunit beta' (1316 aa).

Zn(2+) contacts are provided by Cys60, Cys62, Cys75, and Cys78. Residues Asp535, Asp537, and Asp539 each contribute to the Mg(2+) site. Zn(2+) is bound by residues Cys891, Cys968, Cys975, and Cys978.

It belongs to the RNA polymerase beta' chain family. As to quaternary structure, the RNAP catalytic core consists of 2 alpha, 1 beta, 1 beta' and 1 omega subunit. When a sigma factor is associated with the core the holoenzyme is formed, which can initiate transcription. The cofactor is Mg(2+). It depends on Zn(2+) as a cofactor.

The catalysed reaction is RNA(n) + a ribonucleoside 5'-triphosphate = RNA(n+1) + diphosphate. Functionally, DNA-dependent RNA polymerase catalyzes the transcription of DNA into RNA using the four ribonucleoside triphosphates as substrates. In Mycobacterium tuberculosis (strain CDC 1551 / Oshkosh), this protein is DNA-directed RNA polymerase subunit beta'.